A 267-amino-acid chain; its full sequence is MLQKVKLEDMIQSGMHFGHSTREWNPRMAPYIYGERNGRHILDLVQTYYLLNKVLAFLEEQAAQGKTFLFVGTKQQAAPLIAKTALACESFYVNQRWLGGMLTNWRTIQKSLRKLQEYRRAEERGDWNLLKKQEVARKRREKDRLEKYLSGVENMSRLPGVVILIGQTEEIHAVKECRQLGIPTVTLLDSNCDPNLADWFLPANDDSVSALRLILAWFQQAIQTGQLRSLEREAAKKQKIKKTGVKISGNRRTSSITKKRNPASSKI.

The interval 237–267 is disordered; sequence KQKIKKTGVKISGNRRTSSITKKRNPASSKI. A compositionally biased stretch (polar residues) spans 250–267; sequence NRRTSSITKKRNPASSKI.

This sequence belongs to the universal ribosomal protein uS2 family.

It localises to the plastid. The protein localises to the chloroplast. In Chlorella vulgaris (Green alga), this protein is Small ribosomal subunit protein uS2c (rps2).